Consider the following 235-residue polypeptide: Ribonuclease 3 (235 aa).

In terms of domain architecture, RNase III spans 6-131; it reads IDQLFKLTGH…LIAVMYLDGG (126 aa). Glu44 is a binding site for Mg(2+). The active site involves Asp48. Mg(2+) is bound by residues Asp117 and Glu120. Glu120 is a catalytic residue. The DRBM domain occupies 156–225; that stretch reads DAKTELQEWA…AEKILRREGV (70 aa).

Belongs to the ribonuclease III family. In terms of assembly, homodimer. Requires Mg(2+) as cofactor.

Its subcellular location is the cytoplasm. The catalysed reaction is Endonucleolytic cleavage to 5'-phosphomonoester.. Functionally, digests double-stranded RNA. Involved in the processing of primary rRNA transcript to yield the immediate precursors to the large and small rRNAs (23S and 16S). Processes some mRNAs, and tRNAs when they are encoded in the rRNA operon. Processes pre-crRNA and tracrRNA of type II CRISPR loci if present in the organism. The sequence is that of Ribonuclease 3 from Bartonella tribocorum (strain CIP 105476 / IBS 506).